Consider the following 406-residue polypeptide: Tryptophan 2,3-dioxygenase (406 aa).

Ser-19 carries the phosphoserine modification. Substrate is bound by residues 72-76 (FIITH) and Arg-144. His-328 provides a ligand contact to heme. A substrate-binding site is contributed by Thr-342.

This sequence belongs to the tryptophan 2,3-dioxygenase family. As to quaternary structure, homotetramer. Dimer of dimers. Heme is required as a cofactor. As to expression, liver.

The catalysed reaction is L-tryptophan + O2 = N-formyl-L-kynurenine. Its pathway is amino-acid degradation; L-tryptophan degradation via kynurenine pathway; L-kynurenine from L-tryptophan: step 1/2. Functionally, heme-dependent dioxygenase that catalyzes the oxidative cleavage of the L-tryptophan (L-Trp) pyrrole ring and converts L-tryptophan to N-formyl-L-kynurenine. Catalyzes the oxidative cleavage of the indole moiety. In Rattus norvegicus (Rat), this protein is Tryptophan 2,3-dioxygenase.